A 404-amino-acid polypeptide reads, in one-letter code: Alanyl-tRNA editing protein AlaX-L (404 aa).

His-104, His-108, Cys-202, and His-206 together coordinate Zn(2+).

The protein belongs to the class-II aminoacyl-tRNA synthetase family. Editing domain AlaX-L subfamily. The cofactor is Zn(2+).

Its subcellular location is the cytoplasm. Functions in trans to edit the amino acid moiety from mischarged charged tRNA(Ala). In Pyrococcus horikoshii (strain ATCC 700860 / DSM 12428 / JCM 9974 / NBRC 100139 / OT-3), this protein is Alanyl-tRNA editing protein AlaX-L (alaXL).